The following is a 520-amino-acid chain: Cytochrome P450 monooxygenase 176 (520 aa).

N-linked (GlcNAc...) asparagine glycosylation occurs at asparagine 6. Residues 10–27 form a helical membrane-spanning segment; that stretch reads LLVVAGALFLTFLTTRFI. 2 N-linked (GlcNAc...) asparagine glycosylation sites follow: asparagine 141 and asparagine 270. Cysteine 445 serves as a coordination point for heme. N-linked (GlcNAc...) asparagine glycosylation is present at asparagine 517.

It belongs to the cytochrome P450 family. The cofactor is heme.

It localises to the membrane. It functions in the pathway secondary metabolite biosynthesis. Cytochrome P450 monooxygenase that is able to use delta(6)-protoilludene as a substrate to produce delta(6)-protoilludene-5-ol and an unidentified hydroxyprotoilludene. Is also able to use phenanthrene as a substrate for oxidation. In Postia placenta (strain ATCC 44394 / Madison 698-R) (Brown rot fungus), this protein is Cytochrome P450 monooxygenase 176.